Consider the following 523-residue polypeptide: Ubiquilin (523 aa).

Residues 2 to 77 form the Ubiquitin-like domain; sequence VKINIKSSTD…VHLVKGAAPP (76 aa). A disordered region spans residues 70 to 99; it reads LVKGAAPPPPPPVEQQVPTPSNTQPQGIPG. STI1 domains are found at residues 100-135 and 139-178; these read VPQN…FRDM and NPEM…MREM. Residues 215–227 show a composition bias toward low complexity; the sequence is NQQAASQNQTNSN. The segment at 215–325 is disordered; that stretch reads NQQAASQNQT…ASMFGGGGGG (111 aa). Positions 228–241 are enriched in polar residues; the sequence is PIQTNTDANPNSQP. The segment covering 245-278 has biased composition (low complexity); the sequence is PWSTNSSSTSSNPTSSSPSSRPTTGSSTNTGASN. Over residues 285-296 the composition is skewed to gly residues; sequence SGGGGGMGGGTN. Residues 297 to 310 are compositionally biased toward low complexity; that stretch reads NTGTNNTGSTNNTG. 2 STI1 domains span residues 339 to 380 and 383 to 415; these read DPER…RQMM and NPQL…QQAM. Positions 480-523 constitute a UBA domain; the sequence is PPEQRFRLQLEQLEELGFVDRAANISALTSTNGNINLAIDRLLR.

Stable protein which acts as an antagonist of nosA by repressing cellular differentiation after the tight-aggregate stage, when cells differentiate into two precursor cell types, prespore and prestalk cells, prior to the formation of fruiting bodies. This is Ubiquilin (ubqln) from Dictyostelium discoideum (Social amoeba).